A 383-amino-acid chain; its full sequence is Lipid-A-disaccharide synthase (383 aa).

This sequence belongs to the LpxB family.

The catalysed reaction is a lipid X + a UDP-2-N,3-O-bis[(3R)-3-hydroxyacyl]-alpha-D-glucosamine = a lipid A disaccharide + UDP + H(+). It functions in the pathway bacterial outer membrane biogenesis; LPS lipid A biosynthesis. Functionally, condensation of UDP-2,3-diacylglucosamine and 2,3-diacylglucosamine-1-phosphate to form lipid A disaccharide, a precursor of lipid A, a phosphorylated glycolipid that anchors the lipopolysaccharide to the outer membrane of the cell. The sequence is that of Lipid-A-disaccharide synthase from Anaeromyxobacter dehalogenans (strain 2CP-1 / ATCC BAA-258).